Consider the following 335-residue polypeptide: Glyceraldehyde-3-phosphate dehydrogenase (335 aa).

NAD(+) is bound by residues 12-13 (RI), aspartate 34, arginine 78, and serine 120. Residues 151–153 (SCT) and threonine 182 each bind D-glyceraldehyde 3-phosphate. Cysteine 152 acts as the Nucleophile in catalysis. Position 183 (asparagine 183) interacts with NAD(+). Residues arginine 197, 210-211 (TG), and arginine 233 each bind D-glyceraldehyde 3-phosphate. Asparagine 315 is a binding site for NAD(+).

It belongs to the glyceraldehyde-3-phosphate dehydrogenase family. Homotetramer.

The protein resides in the cytoplasm. The enzyme catalyses D-glyceraldehyde 3-phosphate + phosphate + NAD(+) = (2R)-3-phospho-glyceroyl phosphate + NADH + H(+). The protein operates within carbohydrate degradation; glycolysis; pyruvate from D-glyceraldehyde 3-phosphate: step 1/5. Functionally, catalyzes the oxidative phosphorylation of glyceraldehyde 3-phosphate (G3P) to 1,3-bisphosphoglycerate (BPG) using the cofactor NAD. The first reaction step involves the formation of a hemiacetal intermediate between G3P and a cysteine residue, and this hemiacetal intermediate is then oxidized to a thioester, with concomitant reduction of NAD to NADH. The reduced NADH is then exchanged with the second NAD, and the thioester is attacked by a nucleophilic inorganic phosphate to produce BPG. This Priestia megaterium (strain DSM 319 / IMG 1521) (Bacillus megaterium) protein is Glyceraldehyde-3-phosphate dehydrogenase (gap).